Reading from the N-terminus, the 184-residue chain is Endoribonuclease YbeY (184 aa).

Zn(2+) contacts are provided by histidine 118, histidine 122, and histidine 128. A disordered region spans residues 156–184 (YHQDRQSQKDQRLLDKSRYFDELNHGDTP). Over residues 157-184 (HQDRQSQKDQRLLDKSRYFDELNHGDTP) the composition is skewed to basic and acidic residues.

It belongs to the endoribonuclease YbeY family. The cofactor is Zn(2+).

The protein localises to the cytoplasm. Single strand-specific metallo-endoribonuclease involved in late-stage 70S ribosome quality control and in maturation of the 3' terminus of the 16S rRNA. The polypeptide is Endoribonuclease YbeY (Mycolicibacterium vanbaalenii (strain DSM 7251 / JCM 13017 / BCRC 16820 / KCTC 9966 / NRRL B-24157 / PYR-1) (Mycobacterium vanbaalenii)).